The sequence spans 1504 residues: DNA polymerase zeta catalytic subunit (1504 aa).

Residues C1398, C1401, C1414, and C1417 each contribute to the Zn(2+) site. The segment at 1398–1417 (CCNCGEELTKICSLQLCDDC) adopts a CysA-type zinc-finger fold. C1446, C1449, C1468, and C1473 together coordinate [4Fe-4S] cluster. The CysB motif motif lies at 1446-1473 (CRTCSYRYTSDAGIENDHIASKCNSYDC).

It belongs to the DNA polymerase type-B family. Forms DNA polymerase zeta with REV7. Requires [4Fe-4S] cluster as cofactor.

The protein localises to the mitochondrion. Its subcellular location is the nucleus. It catalyses the reaction DNA(n) + a 2'-deoxyribonucleoside 5'-triphosphate = DNA(n+1) + diphosphate. Nonessential DNA polymerase. Required for DNA damage induced mutagenesis. Involved in DNA repair, mitochondrial DNA repair and translesion synthesis. Translesion synthesis in S.cerevisiae may use a specialized DNA polymerase that is not required for other DNA replicative processes. Has a role in the bypass of abasic (AP) sites. Highly inefficient in incorporating nucleotides opposite the AP site, but efficiently extends from nucleotides, particularly an A, inserted opposite the lesion. This chain is DNA polymerase zeta catalytic subunit (REV3), found in Saccharomyces cerevisiae (strain ATCC 204508 / S288c) (Baker's yeast).